The chain runs to 510 residues: Catalase (510 aa).

The N-terminal stretch at 1-26 (MPLLNWSRHMVCLTAAGLITVPTVYA) is a signal peptide. Active-site residues include histidine 78 and asparagine 150. Tyrosine 358 is a heme binding site. Residues 386 to 400 (NQDGALNTGHTTSGV) show a composition bias toward polar residues. The segment at 386-412 (NQDGALNTGHTTSGVNYEPSRLEPRPA) is disordered.

It belongs to the catalase family. Heme is required as a cofactor.

The protein resides in the periplasm. It carries out the reaction 2 H2O2 = O2 + 2 H2O. In terms of biological role, decomposes hydrogen peroxide into water and oxygen; serves to protect cells from the toxic effects of hydrogen peroxide. This Pseudomonas syringae pv. syringae protein is Catalase (katB).